The following is a 558-amino-acid chain: N-acetylglucosamine-6-O-sulfatase (558 aa).

Ser-101 carries the post-translational modification 3-oxoalanine (Ser).

Belongs to the sulfatase family. Post-translationally, the conversion to 3-oxoalanine (also known as C-formylglycine, FGly), of a serine or cysteine residue in prokaryotes and of a cysteine residue in eukaryotes, is critical for catalytic activity.

In terms of biological role, exosulfatase involved in the degradation of the glycosaminoglycan (GAG) heparan sulfate (HS). Catalyzes the hydrolysis of the 6-sulfate groups of the N-acetyl-D-glucosamine 6-sulfate units. GAG-specific sulfatases play a key role in the persistence of the major human gut symbiont B.thetaiotaomicron in the host gastrointestinal tract. This chain is N-acetylglucosamine-6-O-sulfatase, found in Bacteroides thetaiotaomicron (strain ATCC 29148 / DSM 2079 / JCM 5827 / CCUG 10774 / NCTC 10582 / VPI-5482 / E50).